The chain runs to 115 residues: Large ribosomal subunit protein bL19 (115 aa).

The protein belongs to the bacterial ribosomal protein bL19 family.

Functionally, this protein is located at the 30S-50S ribosomal subunit interface and may play a role in the structure and function of the aminoacyl-tRNA binding site. This Clostridium kluyveri (strain ATCC 8527 / DSM 555 / NBRC 12016 / NCIMB 10680 / K1) protein is Large ribosomal subunit protein bL19.